A 1293-amino-acid polypeptide reads, in one-letter code: Phosphoribosylformylglycinamidine synthase (1293 aa).

ATP is bound by residues 308–319 (GAATGAGGEIRD) and Ala675. Asp676, Glu715, Asn719, and Asp883 together coordinate Mg(2+). Ser885 contributes to the ATP binding site. A Glutamine amidotransferase type-1 domain is found at 1040–1293 (MAILREQGVN…MFRNARKFIG (254 aa)). Cys1133 acts as the Nucleophile in catalysis. Active-site residues include His1258 and Glu1260.

In the N-terminal section; belongs to the FGAMS family. As to quaternary structure, monomer.

The protein resides in the cytoplasm. It catalyses the reaction N(2)-formyl-N(1)-(5-phospho-beta-D-ribosyl)glycinamide + L-glutamine + ATP + H2O = 2-formamido-N(1)-(5-O-phospho-beta-D-ribosyl)acetamidine + L-glutamate + ADP + phosphate + H(+). It functions in the pathway purine metabolism; IMP biosynthesis via de novo pathway; 5-amino-1-(5-phospho-D-ribosyl)imidazole from N(2)-formyl-N(1)-(5-phospho-D-ribosyl)glycinamide: step 1/2. Functionally, phosphoribosylformylglycinamidine synthase involved in the purines biosynthetic pathway. Catalyzes the ATP-dependent conversion of formylglycinamide ribonucleotide (FGAR) and glutamine to yield formylglycinamidine ribonucleotide (FGAM) and glutamate. The polypeptide is Phosphoribosylformylglycinamidine synthase (Methylobacillus flagellatus (strain ATCC 51484 / DSM 6875 / VKM B-1610 / KT)).